The primary structure comprises 330 residues: Peroxidase 55 (330 aa).

Residues 1-30 form the signal peptide; that stretch reads MDIRSDDAKKPMMMWFLGMLLFSMVAESNA. Disulfide bonds link C41–C121, C74–C79, C127–C326, and C206–C238. H72 (proton acceptor) is an active-site residue. Residues D73, V76, G78, D80, and S82 each coordinate Ca(2+). P169 is a binding site for substrate. H199 provides a ligand contact to heme b. T200 contacts Ca(2+). A glycan (N-linked (GlcNAc...) asparagine) is linked at N215. Positions 250, 253, and 258 each coordinate Ca(2+).

Belongs to the peroxidase family. Classical plant (class III) peroxidase subfamily. It depends on heme b as a cofactor. Requires Ca(2+) as cofactor. In terms of tissue distribution, slightly expressed in roots.

It localises to the secreted. It carries out the reaction 2 a phenolic donor + H2O2 = 2 a phenolic radical donor + 2 H2O. Functionally, removal of H(2)O(2), oxidation of toxic reductants, biosynthesis and degradation of lignin, suberization, auxin catabolism, response to environmental stresses such as wounding, pathogen attack and oxidative stress. These functions might be dependent on each isozyme/isoform in each plant tissue. The sequence is that of Peroxidase 55 (PER55) from Arabidopsis thaliana (Mouse-ear cress).